The primary structure comprises 91 residues: Protein LURE 1.3 (91 aa).

An N-terminal signal peptide occupies residues M1 to S20. N24 is a glycosylation site (N-linked (GlcNAc...) asparagine). Intrachain disulfides connect C59–C76, C62–C83, and C66–C85. The interval R68 to S88 is PRK6 binding.

This sequence belongs to the DEFL family. Binds to PRK6 LRRs. In terms of tissue distribution, expressed in the pistil. Detected exclusively in the synergid cells.

The protein resides in the secreted. In terms of biological role, pollen tube attractants guiding pollen tubes to the ovular micropyle. Attracts pollen tubes from both A.thaliana and A.lyrata. This chain is Protein LURE 1.3, found in Arabidopsis thaliana (Mouse-ear cress).